Here is a 361-residue protein sequence, read N- to C-terminus: Chorismate synthase (361 aa).

Arg48 and Arg54 together coordinate NADP(+). Residues 125 to 127, 238 to 239, Gly278, 293 to 297, and Arg319 each bind FMN; these read RSS, NA, and KPTSS.

Belongs to the chorismate synthase family. Homotetramer. The cofactor is FMNH2.

It catalyses the reaction 5-O-(1-carboxyvinyl)-3-phosphoshikimate = chorismate + phosphate. The protein operates within metabolic intermediate biosynthesis; chorismate biosynthesis; chorismate from D-erythrose 4-phosphate and phosphoenolpyruvate: step 7/7. Functionally, catalyzes the anti-1,4-elimination of the C-3 phosphate and the C-6 proR hydrogen from 5-enolpyruvylshikimate-3-phosphate (EPSP) to yield chorismate, which is the branch point compound that serves as the starting substrate for the three terminal pathways of aromatic amino acid biosynthesis. This reaction introduces a second double bond into the aromatic ring system. This chain is Chorismate synthase, found in Escherichia coli (strain K12 / MC4100 / BW2952).